A 423-amino-acid chain; its full sequence is Histidine--tRNA ligase (423 aa).

Belongs to the class-II aminoacyl-tRNA synthetase family. As to quaternary structure, homodimer.

Its subcellular location is the cytoplasm. It carries out the reaction tRNA(His) + L-histidine + ATP = L-histidyl-tRNA(His) + AMP + diphosphate + H(+). In Mycobacterium bovis (strain ATCC BAA-935 / AF2122/97), this protein is Histidine--tRNA ligase (hisS).